The primary structure comprises 796 residues: MNEKALRTLEYHKIIEKLSALAGSSLGREKCHQLLPLVKLEDIVQMQQETTDALTRLYAKGTLSFSGIPDIRDTLMRLEIGASLGAGELLKISSVLTATLRAKNYGYNQKNNEETEEAAQDTLTERFHLLEPLSPINNEIRRCIISEEEIADDASPGLKSVRRQIKITNDKIHESLGSILNSASTKGMLQDAIITMRNGRYCLPIKQEYKNTFQGMMHDQSSTGSTAFIEPMAIVKLNNELAELAVREQEEIEKILAELSNLVATEKYNLKYNQTTLAELDFIFARAGLSKNMKASQPHFNNRHYINIKKGRHPLIDPKKVVPIDIYFGDKFDLLVITGPNTGGKTVSLKTVGLFTLMGQAGLHIPAFDGSELSIFEEVYADIGDEQSIEQSLSTFSSHMTNTVSILEHANENSLVLFDELGAGTDPTEGAALAMAILSYLHQRKIRTMATTHYSELKIFALSTDGVSNACCEFSVETLQPTYRLLIGIPGKSNAFAISSKLGLSNYIIEKAREFIGTKDESFEDVISNLEASRIAMEKDKAEAEQYKKEVEELKRKLAEKNSKIDDAKDRILREANEKARTILQEAKDYADETIRKYNKWGAGGANNKEMENERAALREKLGDTDSSLVSKAKKNRKQHKPSDFKVGDSVHVISLNLKGSVSTLPNAKGDLYVQMGILRSLVNISDLELIDEETIVAKALTKTQSGKIRMSKSMSISPELNIIGKRVDEALPLVDKYLDDAYLAHLPQVTIIHGRGTGALKEAVHAHLKRTNYVKGYRVGGFGEGDHGVTIVEFK.

Residue 339–346 coordinates ATP; that stretch reads GPNTGGKT. A disordered region spans residues 620-644; that stretch reads EKLGDTDSSLVSKAKKNRKQHKPSD. The 76-residue stretch at 721–796 folds into the Smr domain; the sequence is LNIIGKRVDE…DHGVTIVEFK (76 aa).

Belongs to the DNA mismatch repair MutS family. MutS2 subfamily. In terms of assembly, homodimer. Binds to stalled ribosomes, contacting rRNA.

Its function is as follows. Endonuclease that is involved in the suppression of homologous recombination and thus may have a key role in the control of bacterial genetic diversity. Functionally, acts as a ribosome collision sensor, splitting the ribosome into its 2 subunits. Detects stalled/collided 70S ribosomes which it binds and splits by an ATP-hydrolysis driven conformational change. Acts upstream of the ribosome quality control system (RQC), a ribosome-associated complex that mediates the extraction of incompletely synthesized nascent chains from stalled ribosomes and their subsequent degradation. Probably generates substrates for RQC. In Lachnoclostridium phytofermentans (strain ATCC 700394 / DSM 18823 / ISDg) (Clostridium phytofermentans), this protein is Endonuclease MutS2.